Reading from the N-terminus, the 449-residue chain is LGNRWSAIAIPRRTDNEIKNYWNTHLKKRLMQMGIDPVTHKSTAAEELVHYSIIPGLRPVVSTNLTHMSQWDSARAEAEARLSRQSSLTSPASDLAQTSLEHQKSNLSTKNDVNNQVASSNFMSSWKAQVTETLRPNFGVVELDKPPASPVNLQKFLQEWESSLKAPQPEMEGPSIHDSITNIPSLSSGTASELVSTQYSPDVSSASYRMPVSSMILPSPAQISERLMASRHCDSLLPLPRIDLAGSNIFPAQSPSATESSFSFSGLCKVDNEHQYSPTSILHGPSGHDSSYSSPCGSSSSAYDSVDILAQTFSLVHNDNHQHSRATLAMNFSQEPSFWTQQQVALVDALQPESYFTHELGVNIAQKPPSHSFNLSVNSMVNQVGVPNNIPFHSLIICVESIFVAYFRRSRCTSIANLHMFFVFRFYFYLFYFSFDFYRVPLRRRKSQW.

An HTH myb-type domain is found at 1–30 (LGNRWSAIAIPRRTDNEIKNYWNTHLKKRL). The segment at residues 5–26 (WSAIAIPRRTDNEIKNYWNTHL) is a DNA-binding region (H-T-H motif).

It localises to the nucleus. Functionally, possible transcription activator. The sequence is that of Myb-related protein Pp1 (PP1) from Physcomitrium patens (Spreading-leaved earth moss).